Here is a 603-residue protein sequence, read N- to C-terminus: Elongation factor 4 (603 aa).

In terms of domain architecture, tr-type G spans Ser-7–Lys-189. GTP contacts are provided by residues Asp-19–Thr-24 and Asn-136–Asp-139.

It belongs to the TRAFAC class translation factor GTPase superfamily. Classic translation factor GTPase family. LepA subfamily.

The protein resides in the cell inner membrane. The enzyme catalyses GTP + H2O = GDP + phosphate + H(+). In terms of biological role, required for accurate and efficient protein synthesis under certain stress conditions. May act as a fidelity factor of the translation reaction, by catalyzing a one-codon backward translocation of tRNAs on improperly translocated ribosomes. Back-translocation proceeds from a post-translocation (POST) complex to a pre-translocation (PRE) complex, thus giving elongation factor G a second chance to translocate the tRNAs correctly. Binds to ribosomes in a GTP-dependent manner. The chain is Elongation factor 4 from Prochlorococcus marinus (strain NATL1A).